We begin with the raw amino-acid sequence, 423 residues long: uncharacterized protein (423 aa).

Belongs to the mycobacterial PPE family.

Its function is as follows. Could be required for host endothelial-cell invasion and/or intracellular survival. This is an uncharacterized protein from Mycobacterium tuberculosis (strain CDC 1551 / Oshkosh).